Reading from the N-terminus, the 63-residue chain is Conotoxin Lt11.1 (63 aa).

The first 23 residues, 1–23 (MMFRLTSVLLVIVLLNLVVLTNA), serve as a signal peptide directing secretion. 4 disulfides stabilise this stretch: Cys24-Cys34, Cys28-Cys39, Cys33-Cys42, and Cys38-Cys47. A propeptide spanning residues 53–63 (ALLQRLLGHQR) is cleaved from the precursor.

It belongs to the conotoxin I2 superfamily. As to expression, expressed by the venom duct.

It localises to the secreted. This Conus litteratus (Lettered cone) protein is Conotoxin Lt11.1.